Here is a 131-residue protein sequence, read N- to C-terminus: Large ribosomal subunit protein bL19c (131 aa).

The protein belongs to the bacterial ribosomal protein bL19 family.

The protein localises to the plastid. It is found in the cyanelle. In terms of biological role, this protein is located at the 30S-50S ribosomal subunit interface and may play a role in the structure and function of the aminoacyl-tRNA binding site. This is Large ribosomal subunit protein bL19c (rpl19) from Cyanophora paradoxa.